The sequence spans 614 residues: Putative amino acid transporter AAT1 (614 aa).

Transmembrane regions (helical) follow at residues 184–216 (VLFLCTAIGVGLLSIPYVFSELGIILSIILILL), 222–243 (YITTNILCMSSLEHNIFVYGNL), 255–275 (LIDFGLTFSFLSGYVLVLILV), 295–311 (RIFITIVICLLVLPLTF), 318–340 (INCFLVFSLFSITLTVLAVGYQS), 360–380 (HFFKCFNILLFSFSQQSNACF), 401–417 (ILIQVIFYTLFGLLGYL), 437–459 (SILLCKFFLCISFFFSIPLNFIA), 531–547 (CAAIFVTCLCAFVEFNV), 553–575 (FIGIFGGFTSSIISCILPNLIYY), and 587–613 (RYATLALLCFFSVIGLISSIVTAFIII).

Belongs to the amino acid/polyamine transporter 2 family.

The protein resides in the vacuole membrane. In terms of biological role, putative amino acid transporter. Involved in maintaining the osmotic homeostasis of the digestive vacuole. Important for the timely development and growth of the asexual-stage parasites and male gametocyte maturation. The sequence is that of Putative amino acid transporter AAT1 from Plasmodium berghei (strain Anka).